The following is a 2467-amino-acid chain: MERIHVDLDADSPYVKSLQRTFPQFEIEARQVTDNDHANARAFSHVATKLIESEVDRDQVILDIGSAPVRHAHSNHRYHCICPMISAEDPDRLQRYAERLKKSDITDKNIASKAADLLEVMSTPDAETPSLCMHTDATCRYFGSVAVYQDVYAVHAPTSIYHQALKGVRTIYWIGFDTTPFMYKNMAGSYPTYNTNWADERVLEARNIGLGNSDLQESRLGKLSILRKKRLQPTNKIIFSVGSTIYTEDRSLLRSWHLPNVFHLKGKSNFTGRCGTIVSCEGYVIKKITISPGLYGKVENLASTMHREGFLSCKVTDTLRGERVSFAVCTYVPATLCDQMTGILATDVSVDDAQKLLVGLNQRIVVNGRTQRNTNTMQNYLLPVVAQAFSRWAREHRADLDDEKELGVRERTLTMGCCWAFKTQKITSIYKKPGTQTIKKVPAVFDSFVIPRLTSHGLDMGFRRRLKLLLEPTVKPAPAITMADVEHLRGLQQEAEEVAAAEEIREALPPLLPEIEKETVEAEVDLIMQEAGAGSVETPRGHIRVTSYPGEEKIGSYAILSPQAVLNSEKLACIHPLAEQVLVMTHKGRAGRYKVEPYHGKVIVPEGTAVPVQDFQALSESATIVFNEREFVNRYLHHIAINGGALNTDEEYYKTVKTQDTDSEYVFDIDARKCVKREDAGPLCLTGDLVDPPFHEFAYESLKTRPAAPHKVPTIGVYGVPGSGKSGIIKSAVTKKDLVVSAKKENCAEIIRDVRRMRRMDVAARTVDSVLLNGVKHPVNTLYIDEAFACHAGTLLALIAIVKPKKVVLCGDPKQCGFFNMMCLKVHFNHDICTEVYHKSISRRCTQTVTAIVSTLFYDKRMKTVNPCADKIIIDTTGTTKPHKDDLILTCFRGWVKQLQIDYKNHEIMTAAASQGLTRKGVYAVRYKVNENPLYSQTSEHVNVLLTRTEKRIVWKTLAGDPWIKTLTAKYPGDFTASLDDWQREHDAIMARVLDKPQTADVFQNKVNVCWAKALEPVLATANIVLTRQQWETLHPFKHDRAYSPEMALNFFCTRFFGVDLDSGLFSAPTVALTYRDQHWDNSPGKNMYGLNREVAKELSRRYPCITKAVDTGRVADIRNNTIKDYSPTINVVPLNRRLPHSLIVDHKGQGTTDHSGFLSKMKGKSVLVIGDPISIPGKKVESMGPLPTNTIRCDLDLGIPSHVGKYDIIFVNVRTPYRNHHYQQCEDHAIHHSMLTCKAVHHLNTGGTCVAIGYGLADRATENIITAVARSFRFTRVCQPKNTAENTEVLFVFFGKDNGNHTHDQDRLGVVLDNIYQGSTRYEAGRAPAYRVIRGDISKSADQAIVNAANSKGQPGSGVCGALYRKWPAAFDRQPIAVGTARLVKHEPLIIHAVGPNFSKMPEPEGDLKLAAAYMSIASIVNAERITKISVPLLSTGIYSGGKDRVMQSLHHLFTAFDTTDADVTIYCLDKQWETRIIEAIHRKESVEILDDDKPVDIDLVRVHPNSSLAGRPGYSVNEGKLYSYLEGTRFHQTAKDIAEIHAMWPNKSEANEQICLYILGESMSSIRSKCPVEESEASAPPHTLPCLCNYAMTAERVYRLRSAKKEQFAVCSSFLLPKYRITGVQKLQCSKPVLFSGVVPPAVHPRKYAEIILETPPPPATTTVICEPTVPERIPSPVISRAPSAESLLSLGGVSFSSSATRSSTAWSDYDRRFVVTADVHQANTSTWSIPSAPGLDVQLPSDVTDSHWSIPSASGFEVRTPSVQDLTAECAKPRGLAEIMQDFNTAPFQFLSDYRPVPAPRRRPIPSPRSTASAPPVPKPRRTKYQQPPGVARAISEAELDEYIRQHSNXRYEAGAYIFSSETGQGHLQQKSVRQCKLQEPILDRAVHEKYYAPRLDLEREKMLQKKLQLCASEGNRSRYQSRKVENMKAITAERLISGLGTYLSSEVNPVECYRVNYPVPIYSSTVINRFTSAEVAVKTCNLVIQENYPTVASYCITDEYDAYLDMVDGASCCLDTATFCPAKLRSYPKKHSYLQPEIRSAVPSPIQNTLQNVLAAATKRNCNVTQMRELPVLDSAAFNVDCFKKYACNDEYWDTFRDNPIRLTTENVTQYVTKLKGPKAAALFANTHNLKPLQEIPMDQFVMDLKRDVKVTPGTKHTEERPKVQVIQAADPLATAYLCGIHRELVRRLNAVLLPNIHTLFDMSAEDFDAIIAEHFHHGDPVLETDIASFDKSEDDAIAISALMILEDLGVDQPLLDLIEAAFGNITSVHLPTGTRFKFGAMMKSGMFLTLFVNTLVNIMIASRVLRERLTTSACAASIGDDNIVHGVVSDTLMAERCATWLNMEVKIIDAVIGIKAPYFCGGFILVDQITGTACRVADPLKRLFKLGKPLPVDDTQDCDRRRALHDEAMRWNRIGITDELVKAVESRYEIILAGLIITSLSTLAESVKNFKSIRGSPITLYG.

Residues Glu-28 to His-257 form the Alphavirus-like MT domain. The interval Gly-242 to Val-261 is nsP1 membrane-binding. Cys-417 carries S-palmitoyl cysteine; by host lipidation. Residues Asp-688–Lys-839 enclose the (+)RNA virus helicase ATP-binding domain. Gly-719–Ser-726 lines the a ribonucleoside 5'-triphosphate pocket. Residues Ser-840–Ala-988 form the (+)RNA virus helicase C-terminal domain. The region spanning Asp-1001–Ser-1320 is the Peptidase C9 domain. A nucleolus localization signal region spans residues Val-1002 to Thr-1021. Cys-1010 serves as the catalytic For cysteine protease nsP2 activity. Residues Thr-1054–Ser-1063 carry the Nuclear export signal motif. The active-site For cysteine protease nsP2 activity is the His-1079. Positions Pro-1177–Val-1181 match the Nuclear localization signal motif. The region spanning Ala-1328–Glu-1486 is the Macro domain. Residues Asp-1337, Asn-1351, Gly-1359, Gly-1438, Ile-1439, and Tyr-1440 each contribute to the ADP-D-ribose site. Zn(2+) is bound by residues Cys-1588, Cys-1590, Cys-1613, and Cys-1631. Positions Arg-1798–Gly-1833 are disordered. The interval Pro-1831–Ile-1847 is binding to host FXR family members. A RdRp catalytic domain is found at Asp-2224 to Ala-2339.

Interacts with non-structural protein 3. Interacts with RNA-directed RNA polymerase nsP4. Interacts with protease nsP2. interacts with itself. In terms of assembly, interacts with mRNA-capping enzyme nsP1. Interacts with host DDX1. Interacts with host DDX3. Interacts (via C-terminus) with host FXR1; this interaction inhibits the formation of host stress granules on viral mRNAs and the nsp3-FXR1 complexes bind viral RNAs and probably orchestrate the assembly of viral replication complexes. Interacts (via C-terminus) with host FXR2; this interaction inhibits the formation of host stress granules on viral mRNAs and the nsp3-FXR2 complexes bind viral RNAs and probably orchestrate the assembly of viral replication complexes. Interacts (via C-terminus) with host FMR1; this interaction inhibits the formation of host stress granules on viral mRNAs and the nsp3-FMR1 complexes bind viral RNAs and probably orchestrate the assembly of viral replication complexes. As to quaternary structure, interacts with mRNA-capping enzyme nsP1. Interacts with protease nsP2. interacts with itself. Interacts with RNA-directed RNA polymerase nsP4. Interacts with mRNA-capping enzyme nsP1. Interacts with KPNA1/karyopherin-alpha1; this interaction probably allows the active transport of protease nsP2 into the host nucleus. Requires Mg(2+) as cofactor. Mn(2+) is required as a cofactor. Post-translationally, specific enzymatic cleavages in vivo yield mature proteins. The processing of the polyprotein is temporally regulated. In early stages (1.7 hpi), P1234 is first cleaved in trans through its nsP2 protease activity, releasing P123' and nsP4, which associate to form the early replication complex. At the same time, P1234 is also cut at the nsP1/nsP2 site early in infection but with lower efficiency. After replication of the viral minus-strand RNAs (4 hpi), the polyproteins are cut at the nsP1/nsP2 and nsP2/nsP3 sites very efficiently, preventing accumulation of P123' and P1234 and allowing the formation of the late replication complex. NsP3'/nsP4 site is not cleaved anymore and P34 is produced rather than nsP4. In terms of processing, specific enzymatic cleavages in vivo yield mature proteins. The processing of the polyprotein is temporally regulated. In early stages (1.7 hpi), P123 is cleaved at the nsP1/nsP2 site with low efficiency. After replication of the viral minus-strand RNAs (4 hpi), the polyproteins are cut at the nsP1/nsP2 and nsP2/nsP3 sites very efficiently, preventing accumulation of P123 and allowing the formation of the late replication complex. Specific enzymatic cleavages in vivo yield mature proteins. The processing of the polyprotein is temporally regulated. In early stages (1.7 hpi), P123' is cleaved at the nsP1/nsP2 site with low efficiency. After replication of the viral minus-strand RNAs (4 hpi), the polyproteins are cut at the nsP1/nsP2 and nsP2/nsP3 sites very efficiently, preventing accumulation of P123' and allowing the formation of the late replication complex. Post-translationally, palmitoylated by host palmitoyltransferases ZDHHC2 and ZDHHC19. In terms of processing, phosphorylated by host on serines and threonines. Ubiquitinated; targets the protein for rapid degradation via the ubiquitin system. Nsp4 is present in extremely low quantities due to low frequency of translation through the amber stop-codon and the degradation by the ubiquitin pathway.

It localises to the host cytoplasmic vesicle membrane. It is found in the host cell membrane. Its subcellular location is the host cell projection. The protein resides in the host filopodium. The protein localises to the host nucleus. It localises to the host cytoplasm. The catalysed reaction is GTP + S-adenosyl-L-methionine = N(7)-methyl-GTP + S-adenosyl-L-homocysteine. The enzyme catalyses N(7)-methyl-GTP + L-histidyl-[protein] = N(tele)-(N(7)-methylguanosine 5'-phospho)-L-histidyl-[protein] + diphosphate. It carries out the reaction N(tele)-(N(7)-methylguanosine 5'-phospho)-L-histidyl-[protein] + a 5'-end diphospho-(purine-ribonucleoside) in mRNA + H(+) = a 5'-end (N(7)-methyl 5'-triphosphoguanosine)-(purine-ribonucleoside) in mRNA + L-histidyl-[protein]. It catalyses the reaction a 5'-end triphospho-ribonucleoside in mRNA + H2O = a 5'-end diphospho-ribonucleoside in mRNA + phosphate + H(+). The catalysed reaction is a ribonucleoside 5'-triphosphate + H2O = a ribonucleoside 5'-diphosphate + phosphate + H(+). The enzyme catalyses ATP + H2O = ADP + phosphate + H(+). It carries out the reaction RNA(n) + a ribonucleoside 5'-triphosphate = RNA(n+1) + diphosphate. It catalyses the reaction 4-O-(ADP-D-ribosyl)-L-aspartyl-[protein] + H2O = L-aspartyl-[protein] + ADP-D-ribose + H(+). The catalysed reaction is 5-O-(ADP-D-ribosyl)-L-glutamyl-[protein] + H2O = L-glutamyl-[protein] + ADP-D-ribose + H(+). The enzyme catalyses RNA(n) + ATP = RNA(n)-3'-adenine ribonucleotide + diphosphate. It carries out the reaction ADP-alpha-D-ribose 1''-phosphate + H2O = ADP-D-ribose + phosphate. Inhibited by sinefungin. Functionally, inactive precursor of the viral replicase, which is activated by cleavages carried out by the viral protease nsP2. In terms of biological role, the early replication complex formed by the polyprotein P123 and nsP4 synthesizes the minus-strand RNAs (antigenome). Polyprotein P123 is a short-lived polyprotein that accumulates during early stage of infection. As soon P123 is cleaved into mature proteins, the plus-strand RNAs synthesis begins. Its function is as follows. The early replication complex formed by the polyprotein P123' and nsP4 synthesizes minus-strand RNAs (antigenome). Polyprotein P123' is a short-lived polyprotein that accumulates during early stage of infection. As soon P123' is cleaved into mature proteins, the plus-strand RNAs synthesis begins. Cytoplasmic capping enzyme that catalyzes two virus-specific reactions: methyltransferase and nsP1 guanylyltransferase. mRNA-capping is necessary since all viral RNAs are synthesized in the cytoplasm, and host capping enzymes are restricted to the nucleus. The enzymatic reaction involves a covalent link between 7-methyl-GMP and nsP1, whereas eukaryotic capping enzymes form a covalent complex only with GMP. NsP1 capping consists in the following reactions: GTP is first methylated into 7-methyl-GMP and then is covalently linked to nsP1 to form the m7GMp-nsP1 complex from which 7-methyl-GMP complex is transferred to the mRNA to create the cap structure. NsP1 is also needed for the initiation of the minus-strand RNAs synthesis. Probably serves as a membrane anchor for the replication complex composed of nsP1-nsP4. Nsp1 is needed for the initiation of the minus-strand RNAs synthesis. Palmitoylated nsP1 is remodeling host cell cytoskeleton, and induces filopodium-like structure formation at the surface of the host cell. Functionally, multifunctional protein whose N-terminus is part of the RNA polymerase complex and displays NTPase, RNA triphosphatase and helicase activities. NTPase and RNA triphosphatase are involved in viral RNA capping and helicase keeps a check on the dsRNA replication intermediates. The C-terminus harbors a protease that specifically cleaves the polyproteins and releases the mature proteins. Required for the shutoff of minus-strand RNAs synthesis. Inhibits host translation to ensure maximal viral gene expression and evade host immune response. In terms of biological role, seems to be essential for minus-strand RNAs and subgenomic 26S mRNAs synthesis. Displays mono-ADP-ribosylhydrolase activity. ADP-ribosylation is a post-translational modification that controls various processes of the host cell and the virus probably needs to revert it for optimal viral replication. Binds proteins of FXR and G3BP families and sequesters them into the viral RNA replication complexes thereby inhibiting the formation of host stress granules on viral mRNAs. The nsp3-FXR and nsp3-G3BP complexes bind viral RNAs and probably orchestrate the assembly of viral replication complexes, thanks to the ability of G3BP and FXR family members to self-assemble and bind DNA. Its function is as follows. Seems to be essential for minus-strand RNAs and subgenomic 26S mRNAs synthesis. Displays mono-ADP-ribosylhydrolase activity. ADP-ribosylation is a post-translational modification that controls various processes of the host cell and the virus probably needs to revert it for optimal viral replication. Binds proteins of FXR and G3BP families and sequesters them into the viral RNA replication complexes thereby inhibiting the formation of host stress granules on viral mRNAs. The nsp3'-FXR and nsp3-G3BP complexes bind viral RNAs and probably orchestrate the assembly of viral replication complexes, thanks to the ability of G3BP and FXR family members to self-assemble and bind DNA. RNA dependent RNA polymerase. Replicates genomic and antigenomic RNA by recognizing replications specific signals. The early replication complex formed by the polyprotein P123 and nsP4 synthesizes minus-strand RNAs. The late replication complex composed of fully processed nsP1-nsP4 is responsible for the production of genomic and subgenomic plus-strand RNAs. The sequence is that of Polyprotein P1234 from Western equine encephalitis virus (WEEV).